Reading from the N-terminus, the 119-residue chain is MPRVKGGPVTRRRRKKVLKLAKGYFGAKHALYRVANQQVMKSLMYAYRDRRQRKRDFRKLWIVRINAAARQNGLSYSRLMHGLKLAGVEVNRKIVADLAVNDQAAFAQLADLAKANLNK.

Belongs to the bacterial ribosomal protein bL20 family.

Binds directly to 23S ribosomal RNA and is necessary for the in vitro assembly process of the 50S ribosomal subunit. It is not involved in the protein synthesizing functions of that subunit. The polypeptide is Large ribosomal subunit protein bL20 (rplT) (Geobacillus stearothermophilus (Bacillus stearothermophilus)).